The chain runs to 729 residues: Transcriptional activator ptaB (729 aa).

Residues 1–12 (MPQHPGLPPGHP) are compositionally biased toward pro residues. Disordered regions lie at residues 1 to 69 (MPQH…QAHA), 207 to 341 (AAAA…QNQA), 505 to 538 (LELSEQKQSPKVSKNLGKRAQQKQAQQAAPSLPE), and 614 to 729 (RGPQ…KGTA). A compositionally biased stretch (low complexity) spans 38–56 (PGGPQVTQGGPMMGMPPGA). Residues 272 to 285 (APQPHPTPNPPPQQ) are compositionally biased toward pro residues. Composition is skewed to low complexity over residues 286–300 (LPQAQQPGQQPHQQP) and 307–341 (QPQQQQSQQGQPQGQQQQMTPQEAQMKAQQTQNQA). The segment covering 614-625 (RGPQMNGPNQFA) has biased composition (polar residues). Low complexity predominate over residues 655–671 (GPPGMVQQGQMQPNVGQ). Residues 672–682 (ATSASASPQVT) show a composition bias toward polar residues.

It belongs to the MFG1 family. In terms of assembly, interacts with somA.

The protein resides in the nucleus. Transcriptional regulator that forms a complex with somA to control biofilm formation. In Aspergillus fumigatus (strain ATCC MYA-4609 / CBS 101355 / FGSC A1100 / Af293) (Neosartorya fumigata), this protein is Transcriptional activator ptaB.